We begin with the raw amino-acid sequence, 411 residues long: Tyrosine--tRNA ligase (411 aa).

Residue Y34 participates in L-tyrosine binding. The 'HIGH' region signature appears at 39 to 48 (CTATSLHIGS). Positions 171 and 175 each coordinate L-tyrosine. The 'KMSKS' region motif lies at 231–235 (KMGKT). K234 is a binding site for ATP. Residues 345–411 (ISAYELFHEA…GKKRHILVRV (67 aa)) enclose the S4 RNA-binding domain.

The protein belongs to the class-I aminoacyl-tRNA synthetase family. TyrS type 1 subfamily. In terms of assembly, homodimer.

Its subcellular location is the cytoplasm. It carries out the reaction tRNA(Tyr) + L-tyrosine + ATP = L-tyrosyl-tRNA(Tyr) + AMP + diphosphate + H(+). Functionally, catalyzes the attachment of tyrosine to tRNA(Tyr) in a two-step reaction: tyrosine is first activated by ATP to form Tyr-AMP and then transferred to the acceptor end of tRNA(Tyr). This Rickettsia peacockii (strain Rustic) protein is Tyrosine--tRNA ligase.